The chain runs to 402 residues: Iripin-8 (402 aa).

The signal sequence occupies residues 1-16 (MTRLLWLFAAITASLA). N-linked (GlcNAc...) asparagine glycosylation is found at asparagine 164 and asparagine 230.

This sequence belongs to the serpin family. As to quaternary structure, interacts with host thrombin/F2. Interacts with host coagulation factor VII/F7 (activated). Interacts with host coagulation factor X/F10 (activated). Interacts with host coagulation factor XII/F12 (activated). Interacts with host coagulation factor IX/F9 (activated). Interacts with host plasmin/PLG. Interacts with host protein C/PROC (activated). In terms of tissue distribution, saliva (at protein level). Salivary gland. Midgut. Low-level expression in ovary.

It is found in the secreted. Functionally, serine protease inhibitor that modulates blood feeding of ticks on vertebrate species. Inhibits the intrinsic and common pathways of blood coagulation in the host. Inhibits host thrombin, factor VIIa, factor Xa, factor XIa, factor XIIa, plasmin and activated protein C. Inhibits host trypsin and kallikrein. Reduces host complement activity. Does not affect proliferation of CD4+ T-cells and neutrophil migration. The protein is Iripin-8 of Ixodes ricinus (Common tick).